The sequence spans 485 residues: Forkhead box protein N3 (485 aa).

Disordered regions lie at residues 1 to 54 (MGPV…KGGM) and 85 to 108 (PVQDIDDDTPPSPAQSDMPYDAKQ). Over residues 16 to 30 (ISVSSQCYRSSTLSN) the composition is skewed to polar residues. The fork-head DNA-binding region spans 113–209 (KPPYSFSCLI…QALKKTPYHP (97 aa)). Disordered regions lie at residues 316-357 (MESE…ISSS) and 401-449 (PLVE…MKEA). A compositionally biased stretch (low complexity) spans 338–357 (SSAKSANKRSSSPSDSISSS). Residues 410 to 422 (QHKKKQHLLKLRR) are compositionally biased toward basic residues.

As to expression, at early cleavage stages, localized within the animal half of the embryo. At gastrulation, expression expands over the whole embryo excluding the future endodermal cells of the blastopore. During neurulation, expressed in the prospective eye field and in the neural crest cells. Strongly enriched in the eye vesicles at stage 26. From stage 29 onwards, expressed predominantly in the eye, the branchial arches and the vagal ganglion. At stage 38, expressed throughout the head with strongest expression in the head mesenchyme and the eye lens.

It is found in the nucleus. In terms of biological role, acts as a transcriptional repressor. May be involved in DNA damage-inducible cell cycle arrests (checkpoints). The chain is Forkhead box protein N3 from Xenopus laevis (African clawed frog).